The chain runs to 434 residues: O-phosphoseryl-tRNA(Sec) selenium transferase (434 aa).

A tetramerization region spans residues 1 to 40 (MGLNITGLIPKHMENRGKLTLKENLKIIENILEQRKAPEN). R71 serves as a coordination point for pyridoxal 5'-phosphate. The tract at residues 92 to 102 (GRSGNLIDPQP) is phosphate loop (P-loop). 3 residues coordinate substrate: R93, S94, and Q101. K277 is subject to N6-(pyridoxal phosphate)lysine. R306 contacts substrate.

It belongs to the SepSecS family. In terms of assembly, homotetramer. It depends on pyridoxal 5'-phosphate as a cofactor.

It catalyses the reaction O-phospho-L-seryl-tRNA(Sec) + selenophosphate + H2O = L-selenocysteinyl-tRNA(Sec) + 2 phosphate. It participates in aminoacyl-tRNA biosynthesis; selenocysteinyl-tRNA(Sec) biosynthesis; selenocysteinyl-tRNA(Sec) from L-seryl-tRNA(Sec) (archaeal/eukaryal route): step 2/2. Converts O-phosphoseryl-tRNA(Sec) to selenocysteinyl-tRNA(Sec) required for selenoprotein biosynthesis. The chain is O-phosphoseryl-tRNA(Sec) selenium transferase (spcS) from Methanocaldococcus jannaschii (strain ATCC 43067 / DSM 2661 / JAL-1 / JCM 10045 / NBRC 100440) (Methanococcus jannaschii).